Reading from the N-terminus, the 298-residue chain is Acetate permease A (298 aa).

The tract at residues 1-43 (MSAEQNHGLEKDVGGPAAPAAAAPNAPAAAPGAPPAGMSAEEH) is disordered. Positions 14 to 37 (GGPAAPAAAAPNAPAAAPGAPPAG) are enriched in low complexity. Helical transmembrane passes span 86-106 (APLG…INMG), 115-135 (IVIA…GMWE), 146-166 (ALSS…PGGF), 185-205 (SFGL…FCTL), 210-230 (AFFL…VGYI), and 245-265 (AGGF…LAGI).

This sequence belongs to the acetate uptake transporter (AceTr) (TC 2.A.96) family.

It is found in the cell membrane. The protein localises to the vacuole membrane. Functionally, high affinity monocarboxylate transporter (MCT) involved in acetate uptake. Unlike other activities involved in acetate utilization, acpA is dispensable for growth on the acetate precursor ethanol. This chain is Acetate permease A, found in Emericella nidulans (strain FGSC A4 / ATCC 38163 / CBS 112.46 / NRRL 194 / M139) (Aspergillus nidulans).